Here is a 76-residue protein sequence, read N- to C-terminus: DNA-directed RNA polymerase subunit omega (76 aa).

Belongs to the RNA polymerase subunit omega family. In terms of assembly, in cyanobacteria the RNAP catalytic core is composed of 2 alpha, 1 beta, 1 beta', 1 gamma and 1 omega subunit. When a sigma factor is associated with the core the holoenzyme is formed, which can initiate transcription.

It catalyses the reaction RNA(n) + a ribonucleoside 5'-triphosphate = RNA(n+1) + diphosphate. Promotes RNA polymerase assembly. Latches the N- and C-terminal regions of the beta' subunit thereby facilitating its interaction with the beta and alpha subunits. In Acaryochloris marina (strain MBIC 11017), this protein is DNA-directed RNA polymerase subunit omega.